Consider the following 310-residue polypeptide: tRNA uridine(34) hydroxylase (310 aa).

The Rhodanese domain maps to 123 to 217 (ADPDVVVIDV…YLEKVPEDES (95 aa)). The Cysteine persulfide intermediate role is filled by cysteine 177.

This sequence belongs to the TrhO family.

The enzyme catalyses uridine(34) in tRNA + AH2 + O2 = 5-hydroxyuridine(34) in tRNA + A + H2O. Functionally, catalyzes oxygen-dependent 5-hydroxyuridine (ho5U) modification at position 34 in tRNAs. This is tRNA uridine(34) hydroxylase from Acaryochloris marina (strain MBIC 11017).